Consider the following 656-residue polypeptide: Macrolide export ATP-binding/permease protein MacB (656 aa).

An ABC transporter domain is found at I20–R258. An ATP-binding site is contributed by G56–S63. The next 4 membrane-spanning stretches (helical) occupy residues A284–G304, L531–M551, A591–F611, and L619–L639.

This sequence belongs to the ABC transporter superfamily. Macrolide exporter (TC 3.A.1.122) family. In terms of assembly, homodimer.

It is found in the cell inner membrane. Functionally, non-canonical ABC transporter that contains transmembrane domains (TMD), which form a pore in the inner membrane, and an ATP-binding domain (NBD), which is responsible for energy generation. Confers resistance against macrolides. In Azoarcus sp. (strain BH72), this protein is Macrolide export ATP-binding/permease protein MacB.